We begin with the raw amino-acid sequence, 292 residues long: tRNA (guanine-N(7)-)-methyltransferase (292 aa).

The tract at residues 1 to 52 (MGKIEATSKEEKLRVQKEAEARRRAYRDLKKEARQMQKEVKFDTDDNSELPK) is disordered. S-adenosyl-L-methionine-binding positions include Gly-106, 129–130 (EI), 166–167 (NA), and Cys-186. Residue Asp-189 is part of the active site. 264–266 (TEE) lines the S-adenosyl-L-methionine pocket.

Belongs to the class I-like SAM-binding methyltransferase superfamily. TrmB family. Forms a complex with TRM82.

It localises to the nucleus. It carries out the reaction guanosine(46) in tRNA + S-adenosyl-L-methionine = N(7)-methylguanosine(46) in tRNA + S-adenosyl-L-homocysteine. It functions in the pathway tRNA modification; N(7)-methylguanine-tRNA biosynthesis. Functionally, catalyzes the formation of N(7)-methylguanine at position 46 (m7G46) in tRNA. The polypeptide is tRNA (guanine-N(7)-)-methyltransferase (Debaryomyces hansenii (strain ATCC 36239 / CBS 767 / BCRC 21394 / JCM 1990 / NBRC 0083 / IGC 2968) (Yeast)).